A 169-amino-acid polypeptide reads, in one-letter code: UPF0316 protein Dde_2502 (169 aa).

Transmembrane regions (helical) follow at residues 1 to 21 (MITA…LCDV), 38 to 58 (LAFS…SRVI), and 68 to 88 (LAFA…EGVF).

The protein belongs to the UPF0316 family.

It is found in the cell membrane. This Oleidesulfovibrio alaskensis (strain ATCC BAA-1058 / DSM 17464 / G20) (Desulfovibrio alaskensis) protein is UPF0316 protein Dde_2502.